A 340-amino-acid chain; its full sequence is 4-hydroxy-2-oxovalerate aldolase (340 aa).

A Pyruvate carboxyltransferase domain is found at 5–255; it reads IVITEVALRD…QTGVDLYKMM (251 aa). Position 13-14 (13-14) interacts with substrate; it reads RD. Asp-14 contributes to the Mn(2+) binding site. Residue His-17 is the Proton acceptor of the active site. Substrate-binding residues include Ser-167 and His-194. Mn(2+) is bound by residues His-194 and His-196. Position 285 (Tyr-285) interacts with substrate.

This sequence belongs to the 4-hydroxy-2-oxovalerate aldolase family.

It catalyses the reaction (S)-4-hydroxy-2-oxopentanoate = acetaldehyde + pyruvate. This Brevibacillus brevis (strain 47 / JCM 6285 / NBRC 100599) protein is 4-hydroxy-2-oxovalerate aldolase.